A 163-amino-acid polypeptide reads, in one-letter code: 6,7-dimethyl-8-ribityllumazine synthase (163 aa).

Residues phenylalanine 27, 58 to 60 (ALE), and 87 to 89 (CVV) contribute to the 5-amino-6-(D-ribitylamino)uracil site. 92–93 (DT) is a binding site for (2S)-2-hydroxy-3-oxobutyl phosphate. The Proton donor role is filled by histidine 95. Position 120 (asparagine 120) interacts with 5-amino-6-(D-ribitylamino)uracil. Arginine 134 contacts (2S)-2-hydroxy-3-oxobutyl phosphate.

This sequence belongs to the DMRL synthase family.

It catalyses the reaction (2S)-2-hydroxy-3-oxobutyl phosphate + 5-amino-6-(D-ribitylamino)uracil = 6,7-dimethyl-8-(1-D-ribityl)lumazine + phosphate + 2 H2O + H(+). The protein operates within cofactor biosynthesis; riboflavin biosynthesis; riboflavin from 2-hydroxy-3-oxobutyl phosphate and 5-amino-6-(D-ribitylamino)uracil: step 1/2. Catalyzes the formation of 6,7-dimethyl-8-ribityllumazine by condensation of 5-amino-6-(D-ribitylamino)uracil with 3,4-dihydroxy-2-butanone 4-phosphate. This is the penultimate step in the biosynthesis of riboflavin. This is 6,7-dimethyl-8-ribityllumazine synthase from Rhodopseudomonas palustris (strain BisA53).